A 1380-amino-acid chain; its full sequence is DNA-directed RNA polymerase subunit beta (1380 aa).

It belongs to the RNA polymerase beta chain family. The RNAP catalytic core consists of 2 alpha, 1 beta, 1 beta' and 1 omega subunit. When a sigma factor is associated with the core the holoenzyme is formed, which can initiate transcription.

It carries out the reaction RNA(n) + a ribonucleoside 5'-triphosphate = RNA(n+1) + diphosphate. Functionally, DNA-dependent RNA polymerase catalyzes the transcription of DNA into RNA using the four ribonucleoside triphosphates as substrates. This chain is DNA-directed RNA polymerase subunit beta, found in Ehrlichia canis (strain Jake).